The primary structure comprises 376 residues: Chaperone protein DnaJ (376 aa).

Residues 5–70 form the J domain; the sequence is DYYEVLGVGR…DKKAAYDQFG (66 aa). A CR-type zinc finger spans residues 132 to 210; that stretch reads GLTKELRIPT…CHGEGRVEKS (79 aa). Positions 145, 148, 162, 165, 184, 187, 198, and 201 each coordinate Zn(2+). CXXCXGXG motif repeat units lie at residues 145–152, 162–169, 184–191, and 198–205; these read CDLCDGSG, CGTCHGQG, CPTCHGRG, and CGKCHGEG.

Belongs to the DnaJ family. In terms of assembly, homodimer. Requires Zn(2+) as cofactor.

It localises to the cytoplasm. Its function is as follows. Participates actively in the response to hyperosmotic and heat shock by preventing the aggregation of stress-denatured proteins and by disaggregating proteins, also in an autonomous, DnaK-independent fashion. Unfolded proteins bind initially to DnaJ; upon interaction with the DnaJ-bound protein, DnaK hydrolyzes its bound ATP, resulting in the formation of a stable complex. GrpE releases ADP from DnaK; ATP binding to DnaK triggers the release of the substrate protein, thus completing the reaction cycle. Several rounds of ATP-dependent interactions between DnaJ, DnaK and GrpE are required for fully efficient folding. Also involved, together with DnaK and GrpE, in the DNA replication of plasmids through activation of initiation proteins. This is Chaperone protein DnaJ from Shewanella loihica (strain ATCC BAA-1088 / PV-4).